The chain runs to 198 residues: Superoxide dismutase [Mn], mitochondrial (198 aa).

H26 serves as a coordination point for Mn(2+). A 3'-nitrotyrosine modification is found at Y34. K44 and K51 each carry N6-acetyllysine; alternate. N6-succinyllysine; alternate is present on residues K44 and K51. H74 provides a ligand contact to Mn(2+). Residue K90 is modified to N6-acetyllysine. N6-acetyllysine; alternate is present on residues K98 and K106. Residues K98 and K106 each carry the N6-succinyllysine; alternate modification. Positions 159 and 163 each coordinate Mn(2+). K178 bears the N6-acetyllysine mark.

The protein belongs to the iron/manganese superoxide dismutase family. Homotetramer. Mn(2+) serves as cofactor. Nitrated under oxidative stress. Nitration coupled with oxidation inhibits the catalytic activity. Post-translationally, acetylation at Lys-98 decreases enzymatic activity. Deacetylated by SIRT3 upon exposure to ionizing radiations or after long fasting. In terms of processing, polyubiquitinated; leading to proteasomal degradation. Deubiquitinated by USP36 which increases protein stability.

It localises to the mitochondrion matrix. It catalyses the reaction 2 superoxide + 2 H(+) = H2O2 + O2. Destroys superoxide anion radicals which are normally produced within the cells and which are toxic to biological systems. This is Superoxide dismutase [Mn], mitochondrial (SOD2) from Hylobates lar (Lar gibbon).